Reading from the N-terminus, the 529-residue chain is Cytochrome P450 monooxygenase atmQ (529 aa).

A run of 2 helical transmembrane segments spans residues 22 to 42 (YPFA…QQLA) and 51 to 71 (SWVN…IAAF). Residue Cys467 coordinates heme.

The protein belongs to the cytochrome P450 family. Requires heme as cofactor.

Its subcellular location is the membrane. The protein operates within secondary metabolite biosynthesis. Functionally, cytochrome P450 monooxygenase; part of the ATM2 gene cluster that mediates the biosynthesis of aflatrem, a tremorgenic mycotoxin with acute neurotoxic effects. Synthesis of geranylgeranyl diphosphate (GGPP) by AtmG (a GGPP synthase) precedes condensation of GGPP with indole 3-glycerol phosphate, followed by epoxidation and cyclization by AtmM (a FAD-dependent monooxygenase) and AtmC (a prenyltransferase) to produce paspaline. AtmB is also essential for paspaline production, but its exact role has not been identified yet. AtmP, a cytochrome P450 monooxygenase, subsequently converts paspaline to 13-desoxypaxilline via PC-M6 by removal of the C-30 methyl group and oxidation at C-10. AtmQ, a cytochrome P450 monooxygenase, then catalyzes the oxidation of 13-desoxypaxilline, first at C-7 to produce paspalicine and then at C-13 to form paspalinine. Finally, AtmD prenylates paspalinine to form aflatrem. The polypeptide is Cytochrome P450 monooxygenase atmQ (Aspergillus flavus).